The primary structure comprises 151 residues: Major curlin subunit (151 aa).

Positions 1 to 20 (MKLLKVAAIAAIVFSGSALA) are cleaved as a signal peptide. Positions 71 to 90 (TQHGGGNGADVGQGSDDSSI) are disordered.

This sequence belongs to the CsgA/CsgB family.

It localises to the fimbrium. In terms of biological role, curlin is the structural subunit of the curli fimbriae. Curli are coiled surface structures that assemble preferentially at growth temperatures below 37 degrees Celsius. Curli can bind to fibronectin. This chain is Major curlin subunit (csgA), found in Escherichia coli (strain K12).